The chain runs to 365 residues: DNA replication and repair protein RecF (365 aa).

Residue 30–37 (GRNAQGKT) participates in ATP binding.

It belongs to the RecF family.

It is found in the cytoplasm. Functionally, the RecF protein is involved in DNA metabolism; it is required for DNA replication and normal SOS inducibility. RecF binds preferentially to single-stranded, linear DNA. It also seems to bind ATP. This is DNA replication and repair protein RecF from Streptococcus pneumoniae serotype 2 (strain D39 / NCTC 7466).